The chain runs to 463 residues: Perilipin-5 (463 aa).

The tract at residues 1-108 is interaction with LIPE; the sequence is MSEEEAAQIP…KLEEKLPFLQ (108 aa). An essential for lipid droplet targeting region spans residues 1 to 173; it reads MSEEEAAQIP…HFLPMTEEEL (173 aa). Residues S2, S148, and S322 each carry the phosphoserine modification. The tract at residues 185–463 is interaction with PNPLA2 and ABHD5; that stretch reads VGSVEDQRRQ…KHTLMPELDF (279 aa). The tract at residues 444–463 is recruits mitochondria at the lipid droplet surface; the sequence is QEPETPSCPVKHTLMPELDF.

Belongs to the perilipin family. In terms of assembly, homooligomer. Interacts with PNPLA2; prevents interaction of PNPLA2 with ABHD5. Interacts with ABHD5; targets ABHD5 to lipid droplets and promotes interaction of ABHD5 with PNPLA2. Interacts with LIPE. Post-translationally, phosphorylated by PKA. Phosphorylated on serine in skeletal muscle at rest or upon lipolytic stimulation. As to expression, expressed in skeletal muscle, liver, heart and kidney.

The protein resides in the lipid droplet. Its subcellular location is the cytoplasm. It is found in the mitochondrion. In terms of biological role, lipid droplet-associated protein that maintains the balance between lipogenesis and lipolysis and also regulates fatty acid oxidation in oxidative tissues. Recruits mitochondria to the surface of lipid droplets and is involved in lipid droplet homeostasis by regulating both the storage of fatty acids in the form of triglycerides and the release of fatty acids for mitochondrial fatty acid oxidation. In lipid droplet triacylglycerol hydrolysis, plays a role as a scaffolding protein for three major key lipolytic players: ABHD5, PNPLA2 and LIPE. Reduces the triacylglycerol hydrolase activity of PNPLA2 by recruiting and sequestering PNPLA2 to lipid droplets. Phosphorylation by PKA enables lipolysis probably by promoting release of ABHD5 from the perilipin scaffold and by facilitating interaction of ABHD5 with PNPLA2. Also increases lipolysis through interaction with LIPE and upon PKA-mediated phosphorylation of LIPE. This chain is Perilipin-5 (PLIN5), found in Homo sapiens (Human).